Consider the following 398-residue polypeptide: Phosphoglycerate kinase (398 aa).

Substrate-binding positions include 23-25 (DFN), R38, 61-64 (HMGK), R122, and R155. ATP is bound by residues K206, G297, E328, and 354–357 (GGDS).

This sequence belongs to the phosphoglycerate kinase family. As to quaternary structure, monomer.

It is found in the cytoplasm. It catalyses the reaction (2R)-3-phosphoglycerate + ATP = (2R)-3-phospho-glyceroyl phosphate + ADP. It participates in carbohydrate degradation; glycolysis; pyruvate from D-glyceraldehyde 3-phosphate: step 2/5. The sequence is that of Phosphoglycerate kinase from Clostridium botulinum (strain Loch Maree / Type A3).